We begin with the raw amino-acid sequence, 1386 residues long: DNA-directed RNA polymerase subunit beta'' (1386 aa).

The Zn(2+) site is built by Cys220, Cys289, Cys296, and Cys299.

It belongs to the RNA polymerase beta' chain family. RpoC2 subfamily. In plastids the minimal PEP RNA polymerase catalytic core is composed of four subunits: alpha, beta, beta', and beta''. When a (nuclear-encoded) sigma factor is associated with the core the holoenzyme is formed, which can initiate transcription. Zn(2+) is required as a cofactor.

The protein resides in the plastid. Its subcellular location is the chloroplast. The catalysed reaction is RNA(n) + a ribonucleoside 5'-triphosphate = RNA(n+1) + diphosphate. DNA-dependent RNA polymerase catalyzes the transcription of DNA into RNA using the four ribonucleoside triphosphates as substrates. The polypeptide is DNA-directed RNA polymerase subunit beta'' (Marchantia polymorpha (Common liverwort)).